A 348-amino-acid polypeptide reads, in one-letter code: Ion-translocating oxidoreductase complex subunit D (348 aa).

The next 5 membrane-spanning stretches (helical) occupy residues 19-39 (FMLWVIVAMLPALIVQIAFFG), 41-61 (GVVIQLAIALSMAIVIEIVVA), 66-86 (KSTTFYLADLAGVVTATILAM), 87-107 (AIPPYAPYWVVMIGMIVALLL), and 122-142 (PAMVAYAFLLISFPVQMTSWL). Thr-186 is subject to FMN phosphoryl threonine. 5 consecutive transmembrane segments (helical) span residues 212–232 (IFARGWLQLNLAFLAGGLFLL), 236–256 (IIHWQIPVAMLVVFSVLSALT), 265–285 (LNVLSQLFSGAMMFGAFFIAT), 291–311 (SITPKGKLIFGGLIGLLAYLI), and 315–335 (GSYPDAIAFAVLLANLCVPLI).

Belongs to the NqrB/RnfD family. The complex is composed of six subunits: RnfA, RnfB, RnfC, RnfD, RnfE and RnfG. FMN serves as cofactor.

It localises to the cell inner membrane. Its function is as follows. Part of a membrane-bound complex that couples electron transfer with translocation of ions across the membrane. The polypeptide is Ion-translocating oxidoreductase complex subunit D (Haemophilus ducreyi (strain 35000HP / ATCC 700724)).